Consider the following 648-residue polypeptide: MAMEFLRSSRRILESSGCAIALIFLLFIHGAHSFYLPGVAPQDFEKGDELKVKVNKLTSIKTQLPYSYYSLPFCRPSKIVDSTENLGEVLRGDRIENAPYSFKMREAQMCNILGRVTLDAKTAKAFKEKIDDEYRVNMILDNLPLVVPIERVDQGSPSVVYQLGYHVGLKGQYEGSKEQKFFMHNHLAFTVRYHRDIQTDAARIVGFEVKPYSVKHEYEGEWSEKTRLTTCDPHTKRLVVSSATPQEVEQKKEIIFTYDVDFQESEVKWASRWDTYLLMSDNQIHWFSIVNSLMIVLFLSGMVAMIMLRTLYRDISRYNELETQEEAQEETGWKLVHGDVFRLPTNSDLLCVYVGTGVQCLGMVFVTMIFAMLGFLSPSNRGGLMTAMLLLWVFMGLFAGYASSRLYKMFKGTEWKRIAFRTAFLFPAVVSAIFFVLNALIWGQKSSGAVPFGTMFALIFLWFGISVPLVFVGGYIGFKKPAADDPVKTNKIPRQIPEQAWYMNPVFSILIGGILPFGAVFIELFFILTSIWLNQFYYIFGFLFLVFVILIVTCAEITVVLCYFQLCSEDYLWWWRSYLTSGSSALYLFLYATFYFFTKLQITKLVSAMLYFGYMLIASYAFFVLTGTIGFYACLWFTRLIYSSVKID.

A signal peptide spans Met1–Ser33. The Lumenal portion of the chain corresponds to Phe34–His285. A helical transmembrane segment spans residues Trp286–Ile306. Over Met307 to Gly355 the chain is Cytoplasmic. The helical transmembrane segment at Thr356–Leu376 threads the bilayer. At Ser377–Arg381 the chain is on the lumenal side. The helical transmembrane segment at Gly382–Ala402 threads the bilayer. At Ser403–Thr422 the chain is on the cytoplasmic side. The helical transmembrane segment at Ala423–Gly443 threads the bilayer. The Lumenal segment spans residues Gln444–Met455. Residues Phe456–Ile476 form a helical membrane-spanning segment. Over Gly477–Val506 the chain is Cytoplasmic. A helical membrane pass occupies residues Phe507–Ile527. At Leu528–Tyr538 the chain is on the lumenal side. A helical transmembrane segment spans residues Ile539 to Val559. Topologically, residues Val560–Ser577 are cytoplasmic. A helical transmembrane segment spans residues Tyr578–Thr598. Residues Lys599 to Lys604 lie on the Lumenal side of the membrane. The helical transmembrane segment at Leu605–Leu625 threads the bilayer. Over Thr626–Asp648 the chain is Cytoplasmic. An Endoplasmic reticulum export signal motif is present at residues Phe637–Tyr642. A Golgi retention signal motif is present at residues Lys646–Asp648.

The protein belongs to the nonaspanin (TM9SF) (TC 9.A.2) family.

The protein localises to the endosome membrane. Its subcellular location is the golgi apparatus membrane. This chain is Transmembrane 9 superfamily member 8, found in Arabidopsis thaliana (Mouse-ear cress).